Consider the following 22-residue polypeptide: Piscidin-3 (22 aa).

Gly-22 is modified (glycine amide).

Belongs to the pleurocidin family. As to expression, mast cells in gill, skin and gut, and in lining blood vessels in the viscera.

The protein resides in the secreted. It localises to the membrane. Antimicrobial peptide with broad-spectrum activity against Gram-positive and Gram-negative bacteria. Rapidly inactivates both channel catfish herpesvirus (ED(50)=11 uM) and frog virus 3 (ED(50)=16 uM) over a wide temperature range. Has hemolytic activity. The protein is Piscidin-3 of Morone chrysops x Morone saxatilis (White bass x Striped bass).